Consider the following 174-residue polypeptide: Chorismate pyruvate-lyase (174 aa).

Substrate-binding residues include Met36, Arg78, Leu116, and Glu157.

Belongs to the UbiC family. In terms of assembly, monomer.

It is found in the cytoplasm. It carries out the reaction chorismate = 4-hydroxybenzoate + pyruvate. It functions in the pathway cofactor biosynthesis; ubiquinone biosynthesis. Its function is as follows. Removes the pyruvyl group from chorismate, with concomitant aromatization of the ring, to provide 4-hydroxybenzoate (4HB) for the ubiquinone pathway. The polypeptide is Chorismate pyruvate-lyase (Erwinia tasmaniensis (strain DSM 17950 / CFBP 7177 / CIP 109463 / NCPPB 4357 / Et1/99)).